Reading from the N-terminus, the 443-residue chain is Xaa-Pro dipeptidase (443 aa).

5 residues coordinate Mn(2+): Asp246, Asp257, His339, Glu384, and Glu423.

It belongs to the peptidase M24B family. Bacterial-type prolidase subfamily. The cofactor is Mn(2+).

It catalyses the reaction Xaa-L-Pro dipeptide + H2O = an L-alpha-amino acid + L-proline. Splits dipeptides with a prolyl residue in the C-terminal position. The sequence is that of Xaa-Pro dipeptidase from Shigella dysenteriae serotype 1 (strain Sd197).